The following is a 167-amino-acid chain: Methylated-DNA--protein-cysteine methyltransferase (167 aa).

Residue C128 is the Nucleophile; methyl group acceptor of the active site.

It belongs to the MGMT family.

Its subcellular location is the cytoplasm. The enzyme catalyses a 6-O-methyl-2'-deoxyguanosine in DNA + L-cysteinyl-[protein] = S-methyl-L-cysteinyl-[protein] + a 2'-deoxyguanosine in DNA. The catalysed reaction is a 4-O-methyl-thymidine in DNA + L-cysteinyl-[protein] = a thymidine in DNA + S-methyl-L-cysteinyl-[protein]. In terms of biological role, involved in the cellular defense against the biological effects of O6-methylguanine (O6-MeG) and O4-methylthymine (O4-MeT) in DNA. Repairs the methylated nucleobase in DNA by stoichiometrically transferring the methyl group to a cysteine residue in the enzyme. This is a suicide reaction: the enzyme is irreversibly inactivated. The polypeptide is Methylated-DNA--protein-cysteine methyltransferase (Methanocaldococcus jannaschii (strain ATCC 43067 / DSM 2661 / JAL-1 / JCM 10045 / NBRC 100440) (Methanococcus jannaschii)).